A 607-amino-acid polypeptide reads, in one-letter code: Matrix metalloproteinase-16 (607 aa).

A signal peptide spans 1-31 (MILLTFSTGRRLDFVHHSGVFFLQTLLWILC). Positions 32–119 (ATVCGTEQYF…SSKFHIRRKR (88 aa)) are excised as a propeptide. N-linked (GlcNAc...) asparagine glycosylation is present at N83. A Cysteine switch motif is present at residues 99 to 106 (PRCGVPDQ). Position 101 (C101) interacts with Zn(2+). Residues 120–564 (YALTGQKWQH…LDNTASTVKA (445 aa)) are Extracellular-facing. A Ca(2+)-binding site is contributed by D183. The Zn(2+) site is built by H193 and D195. Residues D200, G201, G203, and F205 each contribute to the Ca(2+) site. H208 is a Zn(2+) binding site. Ca(2+) contacts are provided by G215, G217, and D219. Residue H221 participates in Zn(2+) binding. Ca(2+) is bound by residues D223 and E226. H246 contacts Zn(2+). E247 is an active-site residue. Residues H250 and H256 each contribute to the Zn(2+) site. The interval 281-340 (DDLQGIQKIYGPPDKIPPPTRPLPTVPPHRSIPPADPRKNDRPKPPRPPTGRPSYPGAKP) is disordered. The span at 294-315 (DKIPPPTRPLPTVPPHRSIPPA) shows a compositional bias: pro residues. Hemopexin repeat units follow at residues 340-388 (PNIC…WRGL), 389-434 (PPSI…GSGI), 436-484 (PHGI…KGIP), and 485-532 (ESPQ…FMGC). C343 and C532 are disulfide-bonded. Residues 565 to 585 (IAIVIPCILALCLLVLVYTVF) traverse the membrane as a helical segment. Residues 586–607 (QFKRKGTPRHILYCKRSMQEWV) are Cytoplasmic-facing.

This sequence belongs to the peptidase M10A family. As to quaternary structure, interacts with CSPG4 through CSPG4 chondroitin sulfate glycosaminoglycan. Requires Zn(2+) as cofactor. It depends on Ca(2+) as a cofactor. The precursor is cleaved by a furin endopeptidase. Expressed in heart, brain, placenta, ovary and small intestine. Isoform Short is found in the ovary.

Its subcellular location is the cell membrane. The protein resides in the secreted. The protein localises to the extracellular space. It localises to the extracellular matrix. It is found in the cell surface. TIMP-2 shows little inhibitory activity compared to TIMP-1. TIMP-1 seems to have less binding affinity than TIMP-2 for the short isoform. Endopeptidase that degrades various components of the extracellular matrix, such as collagen type III and fibronectin. Activates progelatinase A. Involved in the matrix remodeling of blood vessels. Isoform short cleaves fibronectin and also collagen type III, but at lower rate. It has no effect on type I, II, IV and V collagen. However, upon interaction with CSPG4, it may be involved in degradation and invasion of type I collagen by melanoma cells. The protein is Matrix metalloproteinase-16 of Homo sapiens (Human).